We begin with the raw amino-acid sequence, 306 residues long: ATP synthase gamma chain (306 aa).

It belongs to the ATPase gamma chain family. F-type ATPases have 2 components, CF(1) - the catalytic core - and CF(0) - the membrane proton channel. CF(1) has five subunits: alpha(3), beta(3), gamma(1), delta(1), epsilon(1). CF(0) has three main subunits: a, b and c.

The protein resides in the cell membrane. Produces ATP from ADP in the presence of a proton gradient across the membrane. The gamma chain is believed to be important in regulating ATPase activity and the flow of protons through the CF(0) complex. This chain is ATP synthase gamma chain, found in Bifidobacterium adolescentis (strain ATCC 15703 / DSM 20083 / NCTC 11814 / E194a).